The following is a 261-amino-acid chain: MQLNSSSFHPHHFTCDTTRYSEEQVACICEALSNDARKLSQFVWTVLERDEMRNNQYILKAQAFLAFHSNNFKELYRIIESHHFASEHHLPLQEWWLNAHYHEAEKIRGRQLGAVGKYRIRRKYPLPRTIWDGEETSYCFRDKSRVLLRDWYCRNSYPSPREKRELAEKTHLTVTQVSNWFKNRRQRDRAGVPEPKDCLKDISEEEDLKLIRKTASKLSNSFHNPSDLSSYSAAAAAATFPGFYMNYNDMMIGAGTSYQSL.

Residues 133–192 (GEETSYCFRDKSRVLLRDWYCRNSYPSPREKRELAEKTHLTVTQVSNWFKNRRQRDRAGV) constitute a DNA-binding region (homeobox).

This sequence belongs to the SIX/Sine oculis homeobox family.

The protein resides in the nucleus. This Caenorhabditis elegans protein is Homeobox protein ceh-33 (ceh-33).